We begin with the raw amino-acid sequence, 108 residues long: UPF0060 membrane protein YnfA (108 aa).

The Periplasmic segment spans residues 1-5 (MIKTT). Residues 6 to 26 (LLFFATALCEIIGCFLPWLWL) traverse the membrane as a helical segment. Residues 27–30 (KRNA) lie on the Cytoplasmic side of the membrane. Residues 31-51 (SIWLLLPAGISLALFVWLLTL) form a helical membrane-spanning segment. Residues 52 to 60 (HPAASGRVY) lie on the Periplasmic side of the membrane. A helical membrane pass occupies residues 61–81 (AAYGGVYVCTALIWLRVVDGV). The Cytoplasmic segment spans residues 82–84 (KLS). Residues 85 to 105 (LYDWTGALIALCGMLIIVAGW) traverse the membrane as a helical segment. Over 106-108 (GRT) the chain is Periplasmic.

The protein belongs to the UPF0060 family.

It is found in the cell inner membrane. The protein is UPF0060 membrane protein YnfA of Escherichia coli (strain SMS-3-5 / SECEC).